We begin with the raw amino-acid sequence, 415 residues long: MAGPVLYQDRAMKQITFAPRNHLLTNTNTWTPDSQWLVFDVRPSGASFTGETIERVNIHTGEVEVIYRASQGAHVGVVTVHPKSEKYVFIHGPENPDETWHYDFHHRRGVIVEGGKMSNLDAMDITAPYTPGVLRGGSHVHVFSPNGERVSFTYNDHVMHELDPALDLRNVGVAAPFGPVNVQKQHPREYSGSHWCVLVSKTTPTPQPGSDEINRAYEEGWVGNHALAFIGDTLSPKGEKVPELFIVELPQDEAGWKAAGDAPLSGTETTLPAPPRGVVQRRLTFTHHRAYPGLVNVPRHWVRCNPQGTQIAFLMRDDNGIVQLWLISPQGGEPRQLTHNKTDIQSAFNWHPSGEWLGFVLDNRIACAHAQSGEVEYLTEHHANSPSADAVVFSPDGQWLAWMEGGQLWITETDR.

This is an uncharacterized protein from Escherichia coli (strain K12).